The primary structure comprises 481 residues: MVNLMRKFAKSIGRPGTEFWRGEDMISALPDHLLCHILIFLSTDESVLTSVLSSRWRNLWKWVPRLDLNTSDFPYPNDVTCAAFIDKFLNLYNESYLREFKLRIDQANFRSNVSLYEPCLGVVIKKPNVRHFQVESDLLEHWCTSEIRLTLSACQALVCLKLHLVWLNDFESLSLPCLKIMYLEDVVFPSDAAAETLISCSPVLEDLKLSLHRDDVVVVLRVYSQSLKSFTLKRAVPVYAINGAHTVLVDTPRLVYMSLIDYQFKSFKIISMSDYVKVDLDVDFELMRDELSERNIVYDLLNNFSGVRNMTISWTTLKFIHRFHDMNPLPKFRDLTRLRATMSSDASLEVLRIVLESCPKLKHFHFTLELVNDFPEAVITGFSRVLPRCLVFSLESVEMESPITEKATELKLVRYFLENSATLKKLVLLLNHESTGEKHEPGVLKQLIESPRRSSLCQFEVLAVPPNPEPWWIYVKPQRFL.

Positions 23 to 69 constitute an F-box domain; sequence EDMISALPDHLLCHILIFLSTDESVLTSVLSSRWRNLWKWVPRLDLN. LRR repeat units follow at residues 126-153, 159-185, 186-211, 214-234, 236-261, 289-314, and 340-368; these read KPNVRHFQVESDLLEHWCTSEIRLTLSA, CLKLHLVWLNDFESLSLPCLKIMYLED, VVFPSDAAAETLISCSPVLEDLKLSL, DDVVVVLRVYSQSLKSFTLKR, VPVYAINGAHTVLVDTPRLVYMSLID, DELSERNIVYDLLNNFSGVRNMTISW, and ATMSSDASLEVLRIVLESCPKLKHFHFTL. The region spanning 378–430 is the FBD domain; it reads VITGFSRVLPRCLVFSLESVEMESPITEKATELKLVRYFLENSATLKKLVLLL.

The polypeptide is F-box/FBD/LRR-repeat protein At5g18770 (Arabidopsis thaliana (Mouse-ear cress)).